The chain runs to 181 residues: c-Myc-binding protein homolog (181 aa).

Residues 111-127 (ESTEAAEQQQQQQQQEN) show a composition bias toward low complexity. Disordered regions lie at residues 111–145 (ESTEAAEQQQQQQQQENGETELEKPNESSADVAEI) and 159–181 (VVTTDEAAQPSPTVQAEASGSSE). The segment covering 168-181 (PSPTVQAEASGSSE) has biased composition (polar residues).

The protein belongs to the AMY1 family.

Its subcellular location is the nucleus. This is c-Myc-binding protein homolog from Drosophila melanogaster (Fruit fly).